The sequence spans 202 residues: uncharacterized protein (202 aa).

This is an uncharacterized protein from Homo sapiens (Human).